Reading from the N-terminus, the 810-residue chain is Volume-regulated anion channel subunit LRRC8A (810 aa).

Met-1 is modified (N-acetylmethionine). Residues 1 to 22 (MIPVTELRYFADTQPAYRILKP) are Cytoplasmic-facing. A helical membrane pass occupies residues 23–47 (WWDVFTDYISIVMLMIAVFGGTLQV). At 48–123 (TQDKMICLPC…YENRLHWFAK (76 aa)) the chain is on the extracellular side. Disulfide bonds link Cys-54–Cys-310, Cys-57–Cys-65, and Cys-113–Cys-295. N-linked (GlcNAc...) asparagine glycosylation is found at Asn-66 and Asn-83. A helical membrane pass occupies residues 124–142 (YFPYLVLLHTLIFLACSNF). The Cytoplasmic segment spans residues 143-264 (WFKFPRTSSK…EEGDIVYRLY (122 aa)). Thr-200 is modified (phosphothreonine). Position 202 is a phosphoserine (Ser-202). Position 215 is a phosphothreonine (Thr-215). Ser-217 carries the post-translational modification Phosphoserine. Residues 265–286 (MRQTIIKVIKFALIICYTVYYV) traverse the membrane as a helical segment. Residues 287 to 316 (HNIKFDVDCTVDIESLTGYRTYRCAHPLAT) lie on the Extracellular side of the membrane. The helical transmembrane segment at 317 to 341 (LFKILASFYISLVIFYGLICMYTLW) threads the bilayer. The Cytoplasmic segment spans residues 342–810 (WMLRRSLKKY…RLWRADKEQA (469 aa)). 17 LRR repeats span residues 411 to 422 (WTLDKLRQRLTK), 423 to 445 (NAQD…VFDL), 447 to 468 (ELEV…IAQL), 469 to 492 (TGLK…AFLR), 493 to 515 (ENLR…IYSL), 518 to 542 (LEEL…GLRE), 543 to 565 (LKRL…VTDV), 567 to 589 (VHLQ…SLKK), 590 to 613 (MVNL…IFSL), 614 to 637 (HNLQ…SFQH), 639 to 661 (HRLT…IGNL), 662 to 684 (TNLE…LFYC), 686 to 707 (KLRY…IGLL), 708 to 730 (QNLQ…LFQC), 732 to 753 (KLRA…VGEL), 754 to 776 (TNLT…LGEC), and 778 to 801 (LLKR…VKER). The short motif at 706–707 (LL) is the Di-leucine motif element.

Belongs to the LRRC8 family. Heterohexamer; oligomerizes with other LRRC8 proteins (LRRC8B, LRRC8C, LRRC8D and/or LRRC8E) to form a heterohexamer. Can form homohexamers in vitro, but these have lower conductance than heterohexamers. In vivo, the subunit composition may depend primarily on expression levels, and heterooligomeric channels containing various proportions of the different LRRC8 proteins may coexist. Interact with GRB2. Interacts with NOX4; this interaction prevents the ubiquitin-mediated degradation of LRRC8A. N-glycosylated. In terms of tissue distribution, ubiquitously expressed. High levels detected in the bone marrow; lower levels found in peripheral blood cells. Highly expressed in pancreatic beta cells.

The protein resides in the cell membrane. It localises to the lysosome membrane. The enzyme catalyses chloride(in) = chloride(out). The catalysed reaction is iodide(out) = iodide(in). It catalyses the reaction taurine(out) = taurine(in). It carries out the reaction L-aspartate(out) = L-aspartate(in). The enzyme catalyses L-glutamate(out) = L-glutamate(in). The catalysed reaction is myo-inositol(out) = myo-inositol(in). It catalyses the reaction 2',3'-cGAMP(out) = 2',3'-cGAMP(in). Inhibited by (4-[(2-butyl-6,7-dichloro-2-cyclopentyl-2,3-dihydro-1-oxo-1H-inden-5-yl)oxy]butanoic acid), which plugs the channel like a cork in a bottle by binding in the extracellular selectivity filter and sterically occluding ion conduction. Lipids may block conduction in closed heterohexameric channels. Its function is as follows. Essential component of the volume-regulated anion channel (VRAC, also named VSOAC channel), an anion channel required to maintain a constant cell volume in response to extracellular or intracellular osmotic changes. The VRAC channel conducts iodide better than chloride and can also conduct organic osmolytes like taurine. Mediates efflux of amino acids, such as aspartate and glutamate, in response to osmotic stress. In complex with LRRC8C or LRRC8E, acts as a transporter of immunoreactive cyclic dinucleotide GMP-AMP (2'-3'-cGAMP), an immune messenger produced in response to DNA virus in the cytosol: mediates both import and export of 2'-3'-cGAMP, thereby promoting transfer of 2'-3'-cGAMP to bystander cells. In contrast, complexes containing LRRC8D inhibit transport of 2'-3'-cGAMP. Required for in vivo channel activity, together with at least one other family member (LRRC8B, LRRC8C, LRRC8D or LRRC8E); channel characteristics depend on the precise subunit composition. Can form functional channels by itself (in vitro). Involved in B-cell development: required for the pro-B cell to pre-B cell transition. Also required for T-cell development. Required for myoblast differentiation: VRAC activity promotes membrane hyperpolarization and regulates insulin-stimulated glucose metabolism and oxygen consumption. Also acts as a regulator of glucose-sensing in pancreatic beta cells: VRAC currents, generated in response to hypotonicity- or glucose-induced beta cell swelling, depolarize cells, thereby causing electrical excitation, leading to increase glucose sensitivity and insulin secretion. Also plays a role in lysosome homeostasis by forming functional lysosomal VRAC channels in response to low cytoplasmic ionic strength condition: lysosomal VRAC channels are necessary for the formation of large lysosome-derived vacuoles, which store and then expel excess water to maintain cytosolic water homeostasis. Acts as a key factor in NLRP3 inflammasome activation by modulating itaconate efflux and mitochondria function. The sequence is that of Volume-regulated anion channel subunit LRRC8A from Mus musculus (Mouse).